Here is a 267-residue protein sequence, read N- to C-terminus: Undecaprenyl-diphosphatase (267 aa).

8 consecutive transmembrane segments (helical) span residues methionine 1–valine 21, glycine 40–tryptophan 60, alanine 83–isoleucine 103, methionine 111–tryptophan 131, glycine 144–glycine 164, alanine 189–isoleucine 209, aspartate 219–methionine 239, and valine 245–alanine 265.

It belongs to the UppP family.

The protein resides in the cell inner membrane. The catalysed reaction is di-trans,octa-cis-undecaprenyl diphosphate + H2O = di-trans,octa-cis-undecaprenyl phosphate + phosphate + H(+). Catalyzes the dephosphorylation of undecaprenyl diphosphate (UPP). Confers resistance to bacitracin. The sequence is that of Undecaprenyl-diphosphatase from Roseobacter denitrificans (strain ATCC 33942 / OCh 114) (Erythrobacter sp. (strain OCh 114)).